Consider the following 1011-residue polypeptide: PE-PGRS family protein PE_PGRS30 (1011 aa).

The region spanning methionine 1–alanine 93 is the PE domain. A PGRS domain region spans residues serine 130–leucine 696. Gly residues predominate over residues glycine 595 to leucine 696. The interval glycine 595–glycine 701 is disordered. Residues phenylalanine 697 to proline 1011 form a C-terminal domain region.

This sequence belongs to the mycobacterial PE family. PGRS subfamily.

The protein localises to the secreted. Its subcellular location is the cell wall. It localises to the cell surface. Its function is as follows. Mediates suppression of pro-inflammatory immune response in macrophages via modulation of host cytokine response. Required for full virulence. Involved in inhibition of phago-lysosome fusion. In Mycobacterium tuberculosis (strain ATCC 25618 / H37Rv), this protein is PE-PGRS family protein PE_PGRS30.